The chain runs to 473 residues: Cysteine--tRNA ligase (473 aa).

C27 provides a ligand contact to Zn(2+). Residues 29-39 (ITPYDHVHVGH) carry the 'HIGH' region motif. C213, H238, and E242 together coordinate Zn(2+). Residues 271–275 (KMSKS) carry the 'KMSKS' region motif. K274 is a binding site for ATP.

The protein belongs to the class-I aminoacyl-tRNA synthetase family. Zn(2+) serves as cofactor.

Its subcellular location is the cytoplasm. The enzyme catalyses tRNA(Cys) + L-cysteine + ATP = L-cysteinyl-tRNA(Cys) + AMP + diphosphate. The protein is Cysteine--tRNA ligase of Pyrobaculum calidifontis (strain DSM 21063 / JCM 11548 / VA1).